A 287-amino-acid chain; its full sequence is Protein UL24 homolog (287 aa).

Disordered stretches follow at residues 1-33 and 254-287; these read MARR…FSRR and RVGK…DSNL. Residues 16–33 are compositionally biased toward basic residues; the sequence is HRSRTRSKTAHHRKFSRR.

The protein belongs to the herpesviridae UL24 family.

The protein resides in the virion. The protein localises to the host cytoplasm. It localises to the host nucleus. Its subcellular location is the host nucleolus. It is found in the host Golgi apparatus. Functionally, may participate in nuclear egress of viral particles. Plays a role in the dispersal of several host nucleolar proteins including NCL/nucleolin and NPM1. Since deletion of host NCL/nucleolin negatively impact on nuclear egress, UL24 supposedly acts on this process through its effect on host nucleoli. The polypeptide is Protein UL24 homolog (Infectious laryngotracheitis virus (strain Thorne V882) (ILTV)).